A 153-amino-acid chain; its full sequence is Membrane protein FAM174B (153 aa).

A signal peptide spans 1 to 27; it reads MSALPPQPPPPLLLLLLALLAAPAALA. At 28–84 the chain is on the extracellular side; it reads RRAESASASQPEAEHQPPPGPGNATQLGSGMAGGGSSNSSVDAVVTRISSLLRDLPT. The disordered stretch occupies residues 31-67; that stretch reads ESASASQPEAEHQPPPGPGNATQLGSGMAGGGSSNSS. A glycan (N-linked (GlcNAc...) asparagine) is linked at Asn-50. A helical membrane pass occupies residues 85–105; the sequence is LKATVIVACAFSALLIACLLL. Topologically, residues 106–153 are cytoplasmic; it reads RVFRLGKRLKKTRKYDIITTPAERVEMAPLNEEDDEDEDSTVFDIKYR.

Belongs to the FAM174 family.

Its subcellular location is the cell membrane. It localises to the golgi apparatus. In terms of biological role, essential for Golgi structural integrity. The sequence is that of Membrane protein FAM174B (Fam174b) from Mus musculus (Mouse).